A 347-amino-acid chain; its full sequence is S-adenosylmethionine:tRNA ribosyltransferase-isomerase (347 aa).

This sequence belongs to the QueA family. In terms of assembly, monomer.

It is found in the cytoplasm. The enzyme catalyses 7-aminomethyl-7-carbaguanosine(34) in tRNA + S-adenosyl-L-methionine = epoxyqueuosine(34) in tRNA + adenine + L-methionine + 2 H(+). It functions in the pathway tRNA modification; tRNA-queuosine biosynthesis. Transfers and isomerizes the ribose moiety from AdoMet to the 7-aminomethyl group of 7-deazaguanine (preQ1-tRNA) to give epoxyqueuosine (oQ-tRNA). The chain is S-adenosylmethionine:tRNA ribosyltransferase-isomerase from Bordetella parapertussis (strain 12822 / ATCC BAA-587 / NCTC 13253).